Here is a 774-residue protein sequence, read N- to C-terminus: DNA ligase (774 aa).

NAD(+) contacts are provided by residues 36–40, 85–86, and Glu161; these read DAVYD and SL. The active-site N6-AMP-lysine intermediate is Lys163. Residues Arg184, Glu221, Lys341, and Lys365 each coordinate NAD(+). Residues Cys459, Cys462, Cys477, and Cys482 each coordinate Zn(2+). Positions 693 to 774 constitute a BRCT domain; it reads VQSGLLRGKT…LLEALAVTGI (82 aa).

Belongs to the NAD-dependent DNA ligase family. LigA subfamily. The cofactor is Mg(2+). It depends on Mn(2+) as a cofactor.

It catalyses the reaction NAD(+) + (deoxyribonucleotide)n-3'-hydroxyl + 5'-phospho-(deoxyribonucleotide)m = (deoxyribonucleotide)n+m + AMP + beta-nicotinamide D-nucleotide.. DNA ligase that catalyzes the formation of phosphodiester linkages between 5'-phosphoryl and 3'-hydroxyl groups in double-stranded DNA using NAD as a coenzyme and as the energy source for the reaction. It is essential for DNA replication and repair of damaged DNA. This Trichodesmium erythraeum (strain IMS101) protein is DNA ligase.